Consider the following 134-residue polypeptide: Profilin-2 (134 aa).

A disulfide bond links C13 and C118. The Involved in PIP2 interaction signature appears at 84 to 100 (AVIRGKKGSGGITIKKT). T114 is modified (phosphothreonine).

This sequence belongs to the profilin family. As to quaternary structure, occurs in many kinds of cells as a complex with monomeric actin in a 1:1 ratio. Phosphorylated by MAP kinases.

It is found in the cytoplasm. The protein resides in the cytoskeleton. Functionally, binds to actin and affects the structure of the cytoskeleton. At high concentrations, profilin prevents the polymerization of actin, whereas it enhances it at low concentrations. The polypeptide is Profilin-2 (Olea europaea (Common olive)).